Consider the following 333-residue polypeptide: Mevalonate kinase (333 aa).

109–119 (PVGAGLGSSAA) provides a ligand contact to ATP. D160 serves as the catalytic Proton acceptor.

The protein belongs to the GHMP kinase family. Mevalonate kinase subfamily. Homodimer. Mg(2+) serves as cofactor.

It is found in the cytoplasm. It carries out the reaction (R)-mevalonate + ATP = (R)-5-phosphomevalonate + ADP + H(+). It functions in the pathway isoprenoid biosynthesis; isopentenyl diphosphate biosynthesis via mevalonate pathway; isopentenyl diphosphate from (R)-mevalonate: step 1/3. Functionally, catalyzes the phosphorylation of (R)-mevalonate (MVA) to (R)-mevalonate 5-phosphate (MVAP). Functions in the mevalonate (MVA) pathway leading to isopentenyl diphosphate (IPP), a key precursor for the biosynthesis of isoprenoid compounds such as archaeal membrane lipids. The protein is Mevalonate kinase of Thermococcus sibiricus (strain DSM 12597 / MM 739).